Reading from the N-terminus, the 158-residue chain is Transcription elongation factor GreA (158 aa).

Belongs to the GreA/GreB family.

Necessary for efficient RNA polymerase transcription elongation past template-encoded arresting sites. The arresting sites in DNA have the property of trapping a certain fraction of elongating RNA polymerases that pass through, resulting in locked ternary complexes. Cleavage of the nascent transcript by cleavage factors such as GreA or GreB allows the resumption of elongation from the new 3'terminus. GreA releases sequences of 2 to 3 nucleotides. The protein is Transcription elongation factor GreA of Macrococcus caseolyticus (strain JCSC5402) (Macrococcoides caseolyticum).